The primary structure comprises 608 residues: 2',5'-phosphodiesterase 12 (608 aa).

A mitochondrion-targeting transit peptide spans 1 to 16 (MWRLPGRSALRGVRSV). The span at 90-99 (AAKKSRKNRA) shows a compositional bias: basic residues. The interval 90–111 (AAKKSRKNRAHSSGGAACEATG) is disordered. A Phosphoserine modification is found at S216. The Mg(2+) site is built by E350, D495, and N497. The Proton donor/acceptor role is filled by D495.

Belongs to the CCR4/nocturin family. Mg(2+) is required as a cofactor.

Its subcellular location is the mitochondrion matrix. It catalyses the reaction Exonucleolytic cleavage of poly(A) to 5'-AMP.. Its function is as follows. Enzyme that cleaves 2',5'-phosphodiester bond linking adenosines of the 5'-triphosphorylated oligoadenylates, triphosphorylated oligoadenylates referred as 2-5A modulates the 2-5A system. Degrades triphosphorylated 2-5A to produce AMP and ATP. Also cleaves 3',5'-phosphodiester bond of oligoadenylates. Plays a role as a negative regulator of the 2-5A system that is one of the major pathways for antiviral and antitumor functions induced by interferons (IFNs). Suppression of this enzyme increases cellular 2-5A levels and decreases viral replication in cultured small-airway epithelial cells. This chain is 2',5'-phosphodiesterase 12 (Pde12), found in Mus musculus (Mouse).